Reading from the N-terminus, the 187-residue chain is Large ribosomal subunit protein bL21 (187 aa).

Residues 157–187 form a disordered region; sequence KVAKKAVKKTVKKATKTGAKKKAAKKTSKKA.

Belongs to the bacterial ribosomal protein bL21 family. As to quaternary structure, part of the 50S ribosomal subunit. Contacts protein L20.

Functionally, this protein binds to 23S rRNA in the presence of protein L20. This Bdellovibrio bacteriovorus (strain ATCC 15356 / DSM 50701 / NCIMB 9529 / HD100) protein is Large ribosomal subunit protein bL21.